Here is a 268-residue protein sequence, read N- to C-terminus: Ribosomal RNA small subunit methyltransferase A (268 aa).

Positions 16, 18, 43, 64, 89, and 110 each coordinate S-adenosyl-L-methionine.

It belongs to the class I-like SAM-binding methyltransferase superfamily. rRNA adenine N(6)-methyltransferase family. RsmA subfamily.

It localises to the cytoplasm. The enzyme catalyses adenosine(1518)/adenosine(1519) in 16S rRNA + 4 S-adenosyl-L-methionine = N(6)-dimethyladenosine(1518)/N(6)-dimethyladenosine(1519) in 16S rRNA + 4 S-adenosyl-L-homocysteine + 4 H(+). Specifically dimethylates two adjacent adenosines (A1518 and A1519) in the loop of a conserved hairpin near the 3'-end of 16S rRNA in the 30S particle. May play a critical role in biogenesis of 30S subunits. The protein is Ribosomal RNA small subunit methyltransferase A of Pseudomonas syringae pv. syringae (strain B728a).